The primary structure comprises 328 residues: Beta-ketoacyl-[acyl-carrier-protein] synthase III (328 aa).

Active-site residues include Cys122 and His255. The tract at residues 256–260 is ACP-binding; that stretch reads QANIR. Asn285 is an active-site residue.

This sequence belongs to the thiolase-like superfamily. FabH family. In terms of assembly, homodimer.

It localises to the cytoplasm. It catalyses the reaction malonyl-[ACP] + acetyl-CoA + H(+) = 3-oxobutanoyl-[ACP] + CO2 + CoA. It participates in lipid metabolism; fatty acid biosynthesis. Functionally, catalyzes the condensation reaction of fatty acid synthesis by the addition to an acyl acceptor of two carbons from malonyl-ACP. Catalyzes the first condensation reaction which initiates fatty acid synthesis and may therefore play a role in governing the total rate of fatty acid production. Possesses both acetoacetyl-ACP synthase and acetyl transacylase activities. Its substrate specificity determines the biosynthesis of branched-chain and/or straight-chain of fatty acids. This is Beta-ketoacyl-[acyl-carrier-protein] synthase III from Polynucleobacter asymbioticus (strain DSM 18221 / CIP 109841 / QLW-P1DMWA-1) (Polynucleobacter necessarius subsp. asymbioticus).